The chain runs to 569 residues: Sulfite reductase [NADPH] hemoprotein beta-component (569 aa).

Residues C433, C439, C478, and C482 each contribute to the [4Fe-4S] cluster site. Residue C482 coordinates siroheme.

The protein belongs to the nitrite and sulfite reductase 4Fe-4S domain family. In terms of assembly, alpha(8)-beta(8). The alpha component is a flavoprotein, the beta component is a hemoprotein. Siroheme is required as a cofactor. The cofactor is [4Fe-4S] cluster.

It catalyses the reaction hydrogen sulfide + 3 NADP(+) + 3 H2O = sulfite + 3 NADPH + 4 H(+). It functions in the pathway sulfur metabolism; hydrogen sulfide biosynthesis; hydrogen sulfide from sulfite (NADPH route): step 1/1. Its function is as follows. Component of the sulfite reductase complex that catalyzes the 6-electron reduction of sulfite to sulfide. This is one of several activities required for the biosynthesis of L-cysteine from sulfate. The protein is Sulfite reductase [NADPH] hemoprotein beta-component of Blochmanniella floridana.